A 119-amino-acid chain; its full sequence is Holo-[acyl-carrier-protein] synthase (119 aa).

Mg(2+) contacts are provided by aspartate 8 and glutamate 58.

Belongs to the P-Pant transferase superfamily. AcpS family. The cofactor is Mg(2+).

It localises to the cytoplasm. It catalyses the reaction apo-[ACP] + CoA = holo-[ACP] + adenosine 3',5'-bisphosphate + H(+). Transfers the 4'-phosphopantetheine moiety from coenzyme A to a Ser of acyl-carrier-protein. The chain is Holo-[acyl-carrier-protein] synthase from Streptococcus thermophilus (strain CNRZ 1066).